Consider the following 428-residue polypeptide: MKFPKRYAIVLLTFMCTNVCYIERVGFSIAYTVAADAVGTNQANKGMILSMFYYGYVLSQIPGGWAAQRLGGRLVLLLSFVLWSSICAVVPLDPNRVILLVLSRLLVGVAQGLIFPSIHTVLAQWVPPQERSRSVSLTTSGMYLGAACGMLLLPSLVKNMGPQSVFSVEAMLGVAWLLIWFKFASDPPRTDLPKVASKDKMKVQTGGIMAPRTVKIPWARILFSLPIWAIVVNNFTFHYALYVLMNWLPTYFKLGLQLSLQDMGFSKMLPYLNMFLFSNIGGVLADHLITRKILSVTKTRKLLNTVGFVVSAIALMALPLFRTPSGAIFCSSVSLGFLALGRAGFAVNHMDVAPKFAGIVMGISNTAGTLAGIVGVGLTGRILEAAKASNMDLTSSESWRTVFFVPGYLCIFSSFIFLIFSTGEKIFE.

Residues 1 to 22 form the signal peptide; it reads MKFPKRYAIVLLTFMCTNVCYI. The next 11 membrane-spanning stretches (helical) occupy residues 47–67, 74–94, 98–118, 137–157, 164–184, 221–241, 269–289, 301–321, 327–347, 356–376, and 401–421; these read MILSMFYYGYVLSQIPGGWAA, LVLLLSFVLWSSICAVVPLDP, ILLVLSRLLVGVAQGLIFPSI, LTTSGMYLGAACGMLLLPSLV, SVFSVEAMLGVAWLLIWFKFA, ILFSLPIWAIVVNNFTFHYAL, LPYLNMFLFSNIGGVLADHLI, KLLNTVGFVVSAIALMALPLF, AIFCSSVSLGFLALGRAGFAV, FAGIVMGISNTAGTLAGIVGV, and TVFFVPGYLCIFSSFIFLIFS.

Belongs to the major facilitator superfamily. Sodium/anion cotransporter (TC 2.A.1.14) family.

The protein resides in the cell membrane. In terms of biological role, probable anion transporter. This is Probable anion transporter 6 (PHT4;6) from Oryza sativa subsp. japonica (Rice).